The primary structure comprises 473 residues: ATP synthase subunit beta (473 aa).

Residue 153–160 coordinates ATP; it reads GGAGVGKT.

It belongs to the ATPase alpha/beta chains family. As to quaternary structure, F-type ATPases have 2 components, CF(1) - the catalytic core - and CF(0) - the membrane proton channel. CF(1) has five subunits: alpha(3), beta(3), gamma(1), delta(1), epsilon(1). CF(0) has three main subunits: a(1), b(2) and c(9-12). The alpha and beta chains form an alternating ring which encloses part of the gamma chain. CF(1) is attached to CF(0) by a central stalk formed by the gamma and epsilon chains, while a peripheral stalk is formed by the delta and b chains.

It is found in the cell inner membrane. The enzyme catalyses ATP + H2O + 4 H(+)(in) = ADP + phosphate + 5 H(+)(out). Functionally, produces ATP from ADP in the presence of a proton gradient across the membrane. The catalytic sites are hosted primarily by the beta subunits. The sequence is that of ATP synthase subunit beta from Rickettsia akari (strain Hartford).